Here is a 287-residue protein sequence, read N- to C-terminus: 1-acyl-sn-glycerol-3-phosphate acyltransferase alpha (287 aa).

Residues 1-26 (MELWPGAGTLLLLLFLLLLLLLPTLW) form the signal peptide. Topologically, residues 27 to 37 (FCSPSAKYFFK) are lumenal. A helical membrane pass occupies residues 38–58 (MAFYNGWILFLAVLAIPVCAV). The Cytoplasmic segment spans residues 59–127 (RGRNVENMKI…PGRCVPIAKR (69 aa)). An HXXXXD motif motif is present at residues 104 to 109 (HQSSLD). A helical membrane pass occupies residues 128-148 (ELLWAGSAGLACWLAGVIFID). The Lumenal segment spans residues 149 to 287 (RKRTGDAISV…KPGGVGEAGL (139 aa)). Positions 178–181 (EGTR) match the EGTR motif motif.

It belongs to the 1-acyl-sn-glycerol-3-phosphate acyltransferase family.

It localises to the endoplasmic reticulum membrane. It carries out the reaction a 1-acyl-sn-glycero-3-phosphate + an acyl-CoA = a 1,2-diacyl-sn-glycero-3-phosphate + CoA. The enzyme catalyses 1-(9Z-octadecenoyl)-sn-glycero-3-phosphate + (9Z)-octadecenoyl-CoA = 1,2-di-(9Z-octadecenoyl)-sn-glycero-3-phosphate + CoA. The catalysed reaction is 1-(9Z-octadecenoyl)-sn-glycero-3-phosphate + hexadecanoyl-CoA = 1-(9Z)-octadecenoyl-2-hexadecanoyl-sn-glycero-3-phosphate + CoA. It catalyses the reaction heptadecanoyl-CoA + 1-(9Z-octadecenoyl)-sn-glycero-3-phosphate = 1-(9Z)-octadecenoyl-2-heptadecanoyl-sn-glycero-3-phosphate + CoA. It carries out the reaction 1-(9Z-octadecenoyl)-sn-glycero-3-phosphate + octadecanoyl-CoA = 1-(9Z-octadecenoyl)-2-octadecanoyl-sn-glycero-3-phosphate + CoA. The enzyme catalyses 1-(9Z-octadecenoyl)-sn-glycero-3-phosphate + (9Z,12Z)-octadecadienoyl-CoA = 1-(9Z)-octadecenoyl-2-(9Z,12Z)-octadecadienoyl-sn-glycero-3-phosphate + CoA. The catalysed reaction is 1-(9Z-octadecenoyl)-sn-glycero-3-phosphate + tetradecanoyl-CoA = 1-(9Z)-octadecenoyl-2-tetradecanoyl-sn-glycero-3-phosphate + CoA. It catalyses the reaction pentadecanoyl-CoA + 1-(9Z-octadecenoyl)-sn-glycero-3-phosphate = 1-(9Z)-octadecenoyl-2-pentadecanoyl-sn-glycero-3-phosphate + CoA. It carries out the reaction 1-hexadecanoyl-sn-glycero-3-phosphate + (9Z)-octadecenoyl-CoA = 1-hexadecanoyl-2-(9Z-octadecenoyl)-sn-glycero-3-phosphate + CoA. The enzyme catalyses 1-(9Z,12Z,15Z)-octadecatrienoyl-sn-glycero-3-phosphate + (9Z)-octadecenoyl-CoA = 1-(9Z,12Z,15Z)-octadecatrienoyl-2-(9Z)-octadecenoyl-sn-glycero-3-phosphate + CoA. The catalysed reaction is 1-(6Z,9Z,12Z-octadecatrienoyl)-sn-glycero-3-phosphate + (9Z)-octadecenoyl-CoA = (6Z,9Z,12Z)-octadecatrienoyl-2-(9Z)-octadecenoyl-sn-glycero-3-phosphate + CoA. It catalyses the reaction 1-eicosanoyl-sn-glycero-3-phosphate + (9Z)-octadecenoyl-CoA = 1-eicosanoyl-2-(9Z)-octadecenoyl-sn-glycero-3-phosphate + CoA. It carries out the reaction 1-tetradecanoyl-sn-glycerol 3-phosphate + (9Z)-octadecenoyl-CoA = 1-tetradecanoyl-2-(9Z)-octadecenoyl-sn-glycero-3-phosphate + CoA. The enzyme catalyses 1-(9Z-octadecenoyl)-sn-glycero-3-phosphate + (5Z,8Z,11Z,14Z)-eicosatetraenoyl-CoA = 1-(9Z)-octadecenoyl-2-(5Z,8Z,11Z,14Z)-eicosatetraenoyl-sn-glycero-3-phosphate + CoA. The catalysed reaction is 1-(9Z-octadecenoyl)-sn-glycero-3-phosphate + dodecanoyl-CoA = 1-(9Z)-octadecenoyl-2-dodecanoyl-sn-glycero-3-phosphate + CoA. It catalyses the reaction (6Z)-octadecenoyl-CoA + 1-(9Z-octadecenoyl)-sn-glycero-3-phosphate = 1-(9Z)-octadecenoyl-2-(6Z)-octadecenoyl-sn-glycero-3-phosphate + CoA. It carries out the reaction (11Z)-octadecenoyl-CoA + 1-(9Z-octadecenoyl)-sn-glycero-3-phosphate = 1-(9Z)-octadecenoyl-2-(11Z)-octadecenoyl-sn-glycero-3-phosphate + CoA. The enzyme catalyses (9Z)-hexadecenoyl-CoA + 1-(9Z-octadecenoyl)-sn-glycero-3-phosphate = 1-(9Z-octadecenoyl)-2-(9Z-hexadecenoyl)-sn-glycero-3-phosphate + CoA. It participates in phospholipid metabolism; CDP-diacylglycerol biosynthesis; CDP-diacylglycerol from sn-glycerol 3-phosphate: step 2/3. Its function is as follows. Converts 1-acyl-sn-glycerol-3-phosphate (lysophosphatidic acid or LPA) into 1,2-diacyl-sn-glycerol-3-phosphate (phosphatidic acid or PA) by incorporating an acyl moiety at the sn-2 position of the glycerol backbone. In Bos taurus (Bovine), this protein is 1-acyl-sn-glycerol-3-phosphate acyltransferase alpha (AGPAT1).